The primary structure comprises 1020 residues: Phosphatidylinositol 3-kinase VPS34 (1020 aa).

Positions 49-210 (LSTKFEDPTV…NWLDKMVLPK (162 aa)) constitute a C2 PI3K-type domain. The region spanning 331 to 577 (DKELKPTPQL…DGPIKIYMDI (247 aa)) is the PIK helical domain. Positions 666–1004 (YPEESSVFKS…LINDSVNAFL (339 aa)) constitute a PI3K/PI4K catalytic domain. Positions 672–678 (VFKSSLA) are G-loop. The tract at residues 873-881 (GVGDRHLDN) is catalytic loop. Residues 892-913 (HADFGYILGRDPKPFPPLMKLP) form an activation loop region.

Belongs to the PI3/PI4-kinase family. In terms of assembly, component of the autophagy-specific VPS34 PI3-kinase complex I composed of at least VPS15, VPS30, VPS34, and of the VPS34 PI3-kinase complex II composed of VPS15, VPS30, VPS34 and VPS38. Interacts with VMNA7. Post-translationally, autophosphorylated.

The protein localises to the golgi apparatus. The protein resides in the trans-Golgi network membrane. It is found in the endosome membrane. It catalyses the reaction a 1,2-diacyl-sn-glycero-3-phospho-(1D-myo-inositol) + ATP = a 1,2-diacyl-sn-glycero-3-phospho-(1D-myo-inositol-3-phosphate) + ADP + H(+). In terms of biological role, multifunctional phosphatidylinositol 3-kinase involved in acidification of vacuoles, pH-dependent cell growth, and autophagocytosis. Plays an important role in protein transport and virulence. Component of the autophagy-specific VPS34 PI3-kinase complex I essential to recruit the ATG8-phosphatidylinositol conjugate and the ATG12-ATG5 conjugate to the pre-autophagosomal structure. Also involved in endosome-to-Golgi retrograde transport as part of the VPS34 PI3-kinase complex II. This second complex is required for the endosome-to-Golgi retrieval of PEP1 and KEX2, and the recruitment of VPS5 and VPS7, two components of the retromer complex, to endosomal membranes (probably through the synthesis of a specific pool of phosphatidylinositol 3-phosphate recruiting the retromer to the endosomes). Finally, it might also be involved in ethanol tolerance and cell wall integrity. In Candida albicans (Yeast), this protein is Phosphatidylinositol 3-kinase VPS34.